The following is a 268-amino-acid chain: Tryptophan synthase alpha chain (268 aa).

Active-site proton acceptor residues include Glu-49 and Asp-60.

It belongs to the TrpA family. As to quaternary structure, tetramer of two alpha and two beta chains.

The enzyme catalyses (1S,2R)-1-C-(indol-3-yl)glycerol 3-phosphate + L-serine = D-glyceraldehyde 3-phosphate + L-tryptophan + H2O. It participates in amino-acid biosynthesis; L-tryptophan biosynthesis; L-tryptophan from chorismate: step 5/5. The alpha subunit is responsible for the aldol cleavage of indoleglycerol phosphate to indole and glyceraldehyde 3-phosphate. In Aliivibrio fischeri (strain ATCC 700601 / ES114) (Vibrio fischeri), this protein is Tryptophan synthase alpha chain.